The following is a 150-amino-acid chain: Ribosome-binding factor A (150 aa).

The segment at 126–150 (EVARDLSHDDDEDGGADEAPRNGDE) is disordered.

This sequence belongs to the RbfA family. In terms of assembly, monomer. Binds 30S ribosomal subunits, but not 50S ribosomal subunits or 70S ribosomes.

It is found in the cytoplasm. Functionally, one of several proteins that assist in the late maturation steps of the functional core of the 30S ribosomal subunit. Associates with free 30S ribosomal subunits (but not with 30S subunits that are part of 70S ribosomes or polysomes). Required for efficient processing of 16S rRNA. May interact with the 5'-terminal helix region of 16S rRNA. This Brucella abortus (strain S19) protein is Ribosome-binding factor A.